The chain runs to 350 residues: Small ribosomal subunit biogenesis GTPase RsgA (350 aa).

The segment covering 1 to 17 has biased composition (polar residues); the sequence is MSKNKLSKGQQRRVNAN. Residues 1–24 are disordered; sequence MSKNKLSKGQQRRVNANHQRRLKT. In terms of domain architecture, CP-type G spans 104 to 273; sequence TSVLTRPDFY…VIDSPGVREF (170 aa). Residues 160 to 163 and 214 to 222 contribute to the GTP site; these read NKID and GQSGVGKSS. Positions 297, 302, 304, and 310 each coordinate Zn(2+).

This sequence belongs to the TRAFAC class YlqF/YawG GTPase family. RsgA subfamily. Monomer. Associates with 30S ribosomal subunit, binds 16S rRNA. Zn(2+) is required as a cofactor.

The protein localises to the cytoplasm. In terms of biological role, one of several proteins that assist in the late maturation steps of the functional core of the 30S ribosomal subunit. Helps release RbfA from mature subunits. May play a role in the assembly of ribosomal proteins into the subunit. Circularly permuted GTPase that catalyzes slow GTP hydrolysis, GTPase activity is stimulated by the 30S ribosomal subunit. The sequence is that of Small ribosomal subunit biogenesis GTPase RsgA from Salmonella schwarzengrund (strain CVM19633).